Reading from the N-terminus, the 192-residue chain is CASP-like protein 4C1 (192 aa).

The span at 1-11 shows a compositional bias: polar residues; the sequence is MRSPQSLRNGE. Residues 1–23 are disordered; the sequence is MRSPQSLRNGETPSPSPRPPRFP. The Cytoplasmic portion of the chain corresponds to 1 to 40; it reads MRSPQSLRNGETPSPSPRPPRFPTPHFHSTVSLQKLKRFN. The segment covering 14-23 has biased composition (pro residues); it reads SPSPRPPRFP. Residues 41–61 form a helical membrane-spanning segment; the sequence is LLILVFRLSTFCFSLASSVFM. The Extracellular segment spans residues 62–75; it reads LTNPTWYHFDAFRY. Residues 76–96 form a helical membrane-spanning segment; that stretch reads VFAANAIVAIYSLFEMAASVW. Topologically, residues 97 to 107 are cytoplasmic; the sequence is EISRGNTLFPE. A helical membrane pass occupies residues 108–128; it reads ILQVWFDFGHDQVFAYLLLSA. Residues 129–156 lie on the Extracellular side of the membrane; the sequence is DSAATALAKTLKGGDTCAASNAFCVQSY. The chain crosses the membrane as a helical span at residues 157 to 177; that stretch reads IAIALGFAGFLFLGLSSLLSG. Residues 178–192 lie on the Cytoplasmic side of the membrane; the sequence is FRVVCFLINGSRFYV.

It belongs to the Casparian strip membrane proteins (CASP) family. As to quaternary structure, homodimer and heterodimers.

Its subcellular location is the cell membrane. The sequence is that of CASP-like protein 4C1 from Ricinus communis (Castor bean).